A 397-amino-acid polypeptide reads, in one-letter code: Elongation factor Tu (397 aa).

Positions 10–207 (LPHVNVGTIG…TLDSYIPDPV (198 aa)) constitute a tr-type G domain. Positions 19-26 (GHVDHGKT) are G1. 19-26 (GHVDHGKT) is a GTP binding site. Residue Thr26 coordinates Mg(2+). Residues 60–64 (GITIN) form a G2 region. The G3 stretch occupies residues 81–84 (DCPG). Residues 81-85 (DCPGH) and 136-139 (NKAD) contribute to the GTP site. A G4 region spans residues 136–139 (NKAD). The G5 stretch occupies residues 174–176 (SAR).

This sequence belongs to the TRAFAC class translation factor GTPase superfamily. Classic translation factor GTPase family. EF-Tu/EF-1A subfamily. Monomer.

It is found in the cytoplasm. It carries out the reaction GTP + H2O = GDP + phosphate + H(+). GTP hydrolase that promotes the GTP-dependent binding of aminoacyl-tRNA to the A-site of ribosomes during protein biosynthesis. The sequence is that of Elongation factor Tu from Pseudomonas fluorescens (strain SBW25).